Reading from the N-terminus, the 158-residue chain is Rhombotin-2 (158 aa).

2 consecutive LIM zinc-binding domains span residues 28-90 (LTCG…LFGQ) and 92-154 (GLCA…WTKL).

Expression becomes restricted to the ventral blood island (VBI) as the embryo develops. In late neurula and early tailbud embryos, also expressed in the dorsal lateral plate (DLP), the site of definitive hematopoiesis in the tadpole. Expression in the DLP diminishes during tailbud stages. Expressed in circulating blood cells of tadpoles. Also expressed in non-hematopoietic sites, including the tailbud region and the central nervous system of early neurula embryos.

The protein resides in the nucleus. Transcription factor that acts synergistically with tal1/scl and gata1 to specify embryonic dorsal mesoderm to a hematopoietic fate. Induces globin gene expression together with fgf. The sequence is that of Rhombotin-2 from Xenopus laevis (African clawed frog).